The following is a 318-amino-acid chain: Cytochrome f (318 aa).

The N-terminal stretch at 1-33 (MKNTFSWIKKEITRSISLSLMIYIITRTSISNA) is a signal peptide. Tyr34, Cys54, Cys57, and His58 together coordinate heme. The helical transmembrane segment at 284 to 304 (VQGLLFFLASVILAQIFLVLK) threads the bilayer.

The protein belongs to the cytochrome f family. The 4 large subunits of the cytochrome b6-f complex are cytochrome b6, subunit IV (17 kDa polypeptide, petD), cytochrome f and the Rieske protein, while the 4 small subunits are PetG, PetL, PetM and PetN. The complex functions as a dimer. Heme serves as cofactor.

It localises to the plastid. It is found in the chloroplast thylakoid membrane. Component of the cytochrome b6-f complex, which mediates electron transfer between photosystem II (PSII) and photosystem I (PSI), cyclic electron flow around PSI, and state transitions. In Oenothera biennis (German evening primrose), this protein is Cytochrome f.